We begin with the raw amino-acid sequence, 346 residues long: Eukaryotic translation initiation factor 3 subunit I (346 aa).

5 WD repeats span residues Gly-8–Thr-47, Gly-50–Ser-89, Glu-150–Ile-189, Leu-192–Glu-233, and Asp-289–Lys-328.

The protein belongs to the eIF-3 subunit I family. As to quaternary structure, component of the eukaryotic translation initiation factor 3 (eIF-3) complex.

It localises to the cytoplasm. Its function is as follows. Component of the eukaryotic translation initiation factor 3 (eIF-3) complex, which is involved in protein synthesis of a specialized repertoire of mRNAs and, together with other initiation factors, stimulates binding of mRNA and methionyl-tRNAi to the 40S ribosome. The eIF-3 complex specifically targets and initiates translation of a subset of mRNAs involved in cell proliferation. The protein is Eukaryotic translation initiation factor 3 subunit I of Eremothecium gossypii (strain ATCC 10895 / CBS 109.51 / FGSC 9923 / NRRL Y-1056) (Yeast).